A 636-amino-acid chain; its full sequence is NADP-dependent malic enzyme, chloroplastic (636 aa).

The segment at 1-28 (MLSTRTAAVAASASPASPWKLGGRSEGG) is disordered. The N-terminal 62 residues, 1–62 (MLSTRTAAVA…LPPRRVDAVA (62 aa)), are a transit peptide targeting the chloroplast. A compositionally biased stretch (low complexity) spans 7-18 (AAVAASASPASP). The active-site Proton donor is the Y184. R237 contacts NAD(+). K255 acts as the Proton acceptor in catalysis. A divalent metal cation-binding residues include E327, D328, and D351. An NAD(+)-binding site is contributed by D351. 380–396 (LFLGAGEAGTGIAELIA) serves as a coordination point for NADP(+). N492 contributes to the NAD(+) binding site.

It belongs to the malic enzymes family. Homotetramer. The cofactor is Mg(2+). Requires Mn(2+) as cofactor.

The protein localises to the plastid. Its subcellular location is the chloroplast. The enzyme catalyses (S)-malate + NADP(+) = pyruvate + CO2 + NADPH. It catalyses the reaction oxaloacetate + H(+) = pyruvate + CO2. The protein operates within photosynthesis; C4 acid pathway. The chloroplastic ME isoform decarboxylates malate shuttled from neighboring mesophyll cells. The CO(2) released is then refixed by ribulose-bisphosphate carboxylase. This pathway eliminates the photorespiratory loss of CO(2) that occurs in most plants. This is NADP-dependent malic enzyme, chloroplastic (MOD1) from Zea mays (Maize).